The chain runs to 773 residues: MRKFVFFVVAILIQIHTTTSQRNRSSSPSGFLDLQLEKCPQVLGCRCVRDSTRNIQCFSIDESKLLEIQKIYGSNIQRLELHNWQHDQLNFDIFAPFPQLEHIILRDGDLESLNGTVIHPTLKVLSIENSELTSSSEVCRLLSIFPKIQSLSLSKNYFEKFECDTSNTKLKILDLSQNRISHLEVPNTLRVLNVSRNRLTSFENISTKLTDLDISFNKLSLWPSFDDWKFPNLRSLSAIKLDLQTGFQLDAPLLNSLNIDGASLRYLNFHQILTPKLKKFSARYLTELRNIAGRLPSTVTDVAFTDTMLRTLPADFIPMSSTNHMQKVSFDFSTNQLLCDKCLLQWSLPVYAQTSIRKDCNLTREEIESASCKIGVVANDTGIQYGKYEKPTAISCFSYGVPSPKISWWRFRPAEKLGSYDPITDEISYTNVSETMKESYEIQSGGSLLIRSPNRSHVERYVCVVENEYGKDYGIYHFRLDYLDWYSYDVFNSVFWGGLATSLIVCLISFLLNITWILTRKSALWWIQRAERLSRVRKMVEAMEKYRVRQMESLHEKYTKRVQIVRDNYHQQVEALRVSYASQQEKFQNYKAAQVDAVHSHLDAMRDGYNNQLGRVREYGSKRAEQLWESYERQVNRMRTFSLQHRLKMMRQYKVKQRYVNKLLESLQATSPEVQLENEEKVRAALEIPDDLATIDGSMDTPSRLSRSSSFHSLPEYVIDEQGNVRPGIIPTNAPSIRFTTKPTTSSISNEASTSSPSSSGAHRSPDSPPEKR.

The N-terminal stretch at 1-20 is a signal peptide; the sequence is MRKFVFFVVAILIQIHTTTS. Topologically, residues 21–493 are extracellular; that stretch reads QRNRSSSPSG…DWYSYDVFNS (473 aa). LRR repeat units follow at residues 52–73, 74–96, 97–120, 122–144, 145–167, and 168–191; these read TRNI…KIYG, SNIQ…IFAP, FPQL…VIHP, LKVL…LLSI, FPKI…DTSN, and TKLK…TLRV. Asparagine 114 carries an N-linked (GlcNAc...) asparagine glycan. Asparagine 204 carries an N-linked (GlcNAc...) asparagine glycan. LRR repeat units follow at residues 206-230, 233-251, 252-275, and 296-319; these read STKL…DWKF, LRSL…QLDA, PLLN…ILTP, and PSTV…FIPM. The Ig-like domain occupies 349-479; the sequence is PVYAQTSIRK…GKDYGIYHFR (131 aa). 2 N-linked (GlcNAc...) asparagine glycosylation sites follow: asparagine 361 and asparagine 379. Residues cysteine 396 and cysteine 463 are joined by a disulfide bond. The helical transmembrane segment at 494–514 threads the bilayer; the sequence is VFWGGLATSLIVCLISFLLNI. Topologically, residues 515-773 are cytoplasmic; it reads TWILTRKSAL…RSPDSPPEKR (259 aa). Residues 725 to 773 form a disordered region; that stretch reads VRPGIIPTNAPSIRFTTKPTTSSISNEASTSSPSSSGAHRSPDSPPEKR. Polar residues predominate over residues 733 to 745; that stretch reads NAPSIRFTTKPTT. Residues 746-763 show a composition bias toward low complexity; it reads SSISNEASTSSPSSSGAH. Residues 764-773 are compositionally biased toward basic and acidic residues; that stretch reads RSPDSPPEKR.

The protein resides in the membrane. In Caenorhabditis elegans, this protein is Immunoglobulin domain and leucine-rich repeat-containing protein 2.